Reading from the N-terminus, the 77-residue chain is Acyl carrier protein (77 aa).

Positions serine 2–glutamine 77 constitute a Carrier domain. Serine 37 bears the O-(pantetheine 4'-phosphoryl)serine mark.

Belongs to the acyl carrier protein (ACP) family. In terms of processing, 4'-phosphopantetheine is transferred from CoA to a specific serine of apo-ACP by AcpS. This modification is essential for activity because fatty acids are bound in thioester linkage to the sulfhydryl of the prosthetic group.

Its subcellular location is the cytoplasm. It participates in lipid metabolism; fatty acid biosynthesis. Its function is as follows. Carrier of the growing fatty acid chain in fatty acid biosynthesis. This is Acyl carrier protein from Shewanella denitrificans (strain OS217 / ATCC BAA-1090 / DSM 15013).